Here is a 116-residue protein sequence, read N- to C-terminus: Cysteine proteinase inhibitor 1 (116 aa).

An N-terminal signal peptide occupies residues 1–22 (MVPKPLSLLLLLLLALSAAVVG). Residues 30 to 89 (GGWRPIENLNSAEVQDVAQFAVSEHNKQANDELQYQSVVRGYTQVVAGTNYRLVIAAKDG) form the Cystatin domain. The Secondary area of contact motif lies at 73–77 (QVVAG). N-linked (GlcNAc...) asparagine glycosylation is present at Asn-109.

The protein belongs to the cystatin family. Phytocystatin subfamily.

The protein resides in the secreted. Functionally, specific inhibitor of papain family cysteine proteinases. In Actinidia chinensis var. chinensis (Chinese soft-hair kiwi), this protein is Cysteine proteinase inhibitor 1.